Here is a 179-residue protein sequence, read N- to C-terminus: Mediator of RNA polymerase II transcription subunit 28 (179 aa).

The tract at residues Met1 to Asn43 is disordered. Pro residues predominate over residues Gln12–Pro26. The stretch at Glu109–His139 forms a coiled coil.

This sequence belongs to the Mediator complex subunit 28 family. In terms of assembly, component of the Mediator complex.

The protein resides in the nucleus. Component of the Mediator complex, a coactivator involved in the regulated transcription of nearly all RNA polymerase II-dependent genes. Mediator functions as a bridge to convey information from gene-specific regulatory proteins to the basal RNA polymerase II transcription machinery. Mediator is recruited to promoters by direct interactions with regulatory proteins and serves as a scaffold for the assembly of a functional preinitiation complex with RNA polymerase II and the general transcription factors. The protein is Mediator of RNA polymerase II transcription subunit 28 (med28) of Danio rerio (Zebrafish).